A 395-amino-acid polypeptide reads, in one-letter code: Elongation factor Tu (395 aa).

One can recognise a tr-type G domain in the interval 10-204 (KPHVNIGTIG…AVDSYIPTPQ (195 aa)). The G1 stretch occupies residues 19–26 (GHVDHGKT). 19–26 (GHVDHGKT) contacts GTP. Position 26 (Thr-26) interacts with Mg(2+). A G2 region spans residues 60-64 (GITIN). Positions 81–84 (DCPG) are G3. GTP is bound by residues 81–85 (DCPGH) and 136–139 (NKCD). Residues 136–139 (NKCD) are G4. Positions 174–176 (SAL) are G5.

Belongs to the TRAFAC class translation factor GTPase superfamily. Classic translation factor GTPase family. EF-Tu/EF-1A subfamily. Monomer.

Its subcellular location is the cytoplasm. It catalyses the reaction GTP + H2O = GDP + phosphate + H(+). Its function is as follows. GTP hydrolase that promotes the GTP-dependent binding of aminoacyl-tRNA to the A-site of ribosomes during protein biosynthesis. The chain is Elongation factor Tu from Symbiobacterium thermophilum (strain DSM 24528 / JCM 14929 / IAM 14863 / T).